Consider the following 506-residue polypeptide: Anaerobic nitric oxide reductase transcription regulator NorR (506 aa).

Asp57 is modified (4-aspartylphosphate). The 230-residue stretch at 187–416 (MIGLSPAMTQ…LEHAIHRAVV (230 aa)) folds into the Sigma-54 factor interaction domain. Residues 215 to 222 (GETGTGKE) and 278 to 287 (ADNGTLFLDE) contribute to the ATP site. The segment at residues 481–500 (WAASARALETDVANLHRLAK) is a DNA-binding region (H-T-H motif).

It functions in the pathway nitrogen metabolism; nitric oxide reduction. Required for the expression of anaerobic nitric oxide (NO) reductase, acts as a transcriptional activator for at least the norVW operon. Activation also requires sigma-54. This is Anaerobic nitric oxide reductase transcription regulator NorR from Salmonella paratyphi A (strain ATCC 9150 / SARB42).